We begin with the raw amino-acid sequence, 457 residues long: tRNA-2-methylthio-N(6)-dimethylallyladenosine synthase (457 aa).

Positions 3–120 (KKVYIKTFGC…LPQMIDQRRA (118 aa)) constitute an MTTase N-terminal domain. [4Fe-4S] cluster contacts are provided by Cys12, Cys49, Cys83, Cys157, Cys161, and Cys164. The 235-residue stretch at 143–377 (RVEGPSAFVS…QATIEENVAR (235 aa)) folds into the Radical SAM core domain. The TRAM domain occupies 380–447 (RSMVGKVERI…PHSLRGELLL (68 aa)).

This sequence belongs to the methylthiotransferase family. MiaB subfamily. As to quaternary structure, monomer. The cofactor is [4Fe-4S] cluster.

The protein localises to the cytoplasm. It catalyses the reaction N(6)-dimethylallyladenosine(37) in tRNA + (sulfur carrier)-SH + AH2 + 2 S-adenosyl-L-methionine = 2-methylsulfanyl-N(6)-dimethylallyladenosine(37) in tRNA + (sulfur carrier)-H + 5'-deoxyadenosine + L-methionine + A + S-adenosyl-L-homocysteine + 2 H(+). Its function is as follows. Catalyzes the methylthiolation of N6-(dimethylallyl)adenosine (i(6)A), leading to the formation of 2-methylthio-N6-(dimethylallyl)adenosine (ms(2)i(6)A) at position 37 in tRNAs that read codons beginning with uridine. This chain is tRNA-2-methylthio-N(6)-dimethylallyladenosine synthase, found in Burkholderia ambifaria (strain MC40-6).